A 177-amino-acid chain; its full sequence is 3-hydroxydecanoyl-[acyl-carrier-protein] dehydratase (177 aa).

Residue histidine 76 is part of the active site.

This sequence belongs to the thioester dehydratase family. FabA subfamily. As to quaternary structure, homodimer.

It is found in the cytoplasm. It catalyses the reaction a (3R)-hydroxyacyl-[ACP] = a (2E)-enoyl-[ACP] + H2O. The catalysed reaction is (3R)-hydroxydecanoyl-[ACP] = (2E)-decenoyl-[ACP] + H2O. It carries out the reaction (2E)-decenoyl-[ACP] = (3Z)-decenoyl-[ACP]. It functions in the pathway lipid metabolism; fatty acid biosynthesis. Its function is as follows. Necessary for the introduction of cis unsaturation into fatty acids. Catalyzes the dehydration of (3R)-3-hydroxydecanoyl-ACP to E-(2)-decenoyl-ACP and then its isomerization to Z-(3)-decenoyl-ACP. Can catalyze the dehydratase reaction for beta-hydroxyacyl-ACPs with saturated chain lengths up to 16:0, being most active on intermediate chain length. The polypeptide is 3-hydroxydecanoyl-[acyl-carrier-protein] dehydratase (Actinobacillus succinogenes (strain ATCC 55618 / DSM 22257 / CCUG 43843 / 130Z)).